A 530-amino-acid chain; its full sequence is Probable flavin-containing monooxygenase 1 (530 aa).

Residues 17-21, glutamate 38, 46-47, and 58-59 contribute to the FAD site; these read GAGVS, VW, and QS. 219-222 contributes to the NADP(+) binding site; sequence SAID.

This sequence belongs to the FMO family. FAD serves as cofactor.

Required for the establishment of systemic acquired resistance (SAR). Not involved in local defense mechanisms. Confers a salicylic acid-dependent (SA) resistance to virulent pathogens such as P.syringae pv tomato and H.parasitica. The sequence is that of Probable flavin-containing monooxygenase 1 (FMO1) from Arabidopsis thaliana (Mouse-ear cress).